The chain runs to 89 residues: Co-chaperonin GroES (89 aa).

Belongs to the GroES chaperonin family. In terms of assembly, heptamer of 7 subunits arranged in a ring. Interacts with the chaperonin GroEL.

The protein localises to the cytoplasm. Together with the chaperonin GroEL, plays an essential role in assisting protein folding. The GroEL-GroES system forms a nano-cage that allows encapsulation of the non-native substrate proteins and provides a physical environment optimized to promote and accelerate protein folding. GroES binds to the apical surface of the GroEL ring, thereby capping the opening of the GroEL channel. In Petrotoga mobilis (strain DSM 10674 / SJ95), this protein is Co-chaperonin GroES.